Reading from the N-terminus, the 360-residue chain is NADP-dependent alcohol dehydrogenase 6 (360 aa).

Residue Cys-46 coordinates Zn(2+). Gly-47 and His-51 together coordinate NADP(+). Zn(2+)-binding residues include His-68, Cys-100, Cys-103, Cys-106, and Cys-114. Ser-131 carries the phosphoserine modification. Zn(2+) is bound at residue Cys-163. Residues Leu-188, Gly-190, Ile-191, Ser-210, Arg-211, Lys-215, Cys-250, Ser-252, Thr-255, Asp-256, Ile-275, Ile-277, Tyr-298, Ser-299, Leu-301, and Arg-348 each coordinate NADP(+). Phosphoserine is present on Ser-359.

It belongs to the zinc-containing alcohol dehydrogenase family. Homodimer. Zn(2+) serves as cofactor.

The protein localises to the cytoplasm. It localises to the nucleus. The enzyme catalyses a primary alcohol + NADP(+) = an aldehyde + NADPH + H(+). The catalysed reaction is (E)-cinnamyl alcohol + NADP(+) = (E)-cinnamaldehyde + NADPH + H(+). It catalyses the reaction hexan-1-ol + NADP(+) = hexanal + NADPH + H(+). It carries out the reaction 3-methylbutanol + NADP(+) = 3-methylbutanal + NADPH + H(+). The enzyme catalyses S-nitroso-CoA + NADPH + H(+) = sulfinamide-CoA + NADP(+). NADP-dependent, medium-chain alcohol dehydrogenase with a broad substrate specificity. Aldehydes exhibited 50-12000 times higher catalytic efficiency than the corresponding alcohols, therefore the major function of the enzyme is as an aldehyde reductase. The enzyme is active towards aromatic and aliphatic (linear and branched-chain) aldehydes. The enzyme is very active towards aromatic aldehydes, such as cinnamaldehyde, benzaldehyde and substituted benzaldehydes, such as veratraldehyde and panisaldehyde. It exhibits low activity towards substituted cinnamaldehydes, such as coniferaldehyde and sinapaldehyde. The enzyme has no activity with ketones, such as acetone or cyclohexanone. For the reverse reaction, linear and branched-chain primary alcohols are substrates, whereas very low activity is found with secondary alcohols, such as butan-2-ol. The enzyme may be physiologically involved in several steps of the lignin degradation pathway, initiated by other microorganisms, in the synthesis of fusel alcohols, products derived from the aminoacidic metabolism, and in the homeostasis of NADP(H). Has the ability to reduce 5-hydroxymethyl furfural (HMF), a furan derivative which is formed during the hydrolysis of lignocellulosic materials, to 5-hydroxymethylfurfuryl alcohol, thereby alleviating the inhibition of the fermentation of lignocellulose hydrolysates by HMF during fuel ethanol production. Also acts as an inhibitor of protein S-nitrosylation by mediating degradation of S-nitroso-coenzyme A (S-nitroso-CoA), a cofactor required to S-nitrosylate proteins. The polypeptide is NADP-dependent alcohol dehydrogenase 6 (Saccharomyces cerevisiae (strain ATCC 204508 / S288c) (Baker's yeast)).